The chain runs to 158 residues: Small ribosomal subunit protein uS15 (158 aa).

A compositionally biased stretch (basic residues) spans 1–18; it reads MARMHARKRGKSGSKRPP. The tract at residues 1 to 21 is disordered; the sequence is MARMHARKRGKSGSKRPPRTA.

This sequence belongs to the universal ribosomal protein uS15 family. In terms of assembly, part of the 30S ribosomal subunit.

The protein is Small ribosomal subunit protein uS15 of Pyrococcus furiosus (strain ATCC 43587 / DSM 3638 / JCM 8422 / Vc1).